The primary structure comprises 550 residues: Glucose-6-phosphate isomerase (550 aa).

The active-site Proton donor is E356. Residues H387 and K515 contribute to the active site.

This sequence belongs to the GPI family.

It is found in the cytoplasm. It carries out the reaction alpha-D-glucose 6-phosphate = beta-D-fructose 6-phosphate. Its pathway is carbohydrate biosynthesis; gluconeogenesis. The protein operates within carbohydrate degradation; glycolysis; D-glyceraldehyde 3-phosphate and glycerone phosphate from D-glucose: step 2/4. Functionally, catalyzes the reversible isomerization of glucose-6-phosphate to fructose-6-phosphate. This is Glucose-6-phosphate isomerase from Vibrio campbellii (strain ATCC BAA-1116).